We begin with the raw amino-acid sequence, 1074 residues long: Phospholipase D1 (1074 aa).

The region spanning 81 to 212 (IKAQVLEVER…TEFLDVSQLS (132 aa)) is the PX domain. The 110-residue stretch at 219–328 (PKGLEGMIMK…WGGAIEEFIR (110 aa)) folds into the PH domain. Residues Cys240 and Cys241 are each lipidated (S-palmitoyl cysteine). The PLD phosphodiesterase 1 domain occupies 459-486 (YLWAHHEKLVIIDQSVAFVGGIDLAYGR). A catalytic region spans residues 463–928 (HHEKLVIIDQ…MLGKRDSEMA (466 aa)). Phosphoserine is present on residues Ser499, Ser561, and Ser629. In terms of domain architecture, PLD phosphodiesterase 2 spans 891–918 (ELIYVHSKLLIADDNTVIIGSANINDRS).

It belongs to the phospholipase D family. As to quaternary structure, interacts with PIP5K1B. As to expression, expressed in kidney, lung, and at a much lower levels, in brain, liver, heart, testis and spleen.

The protein resides in the cytoplasm. It is found in the perinuclear region. It localises to the endoplasmic reticulum membrane. The protein localises to the golgi apparatus membrane. Its subcellular location is the late endosome membrane. The catalysed reaction is a 1,2-diacyl-sn-glycero-3-phosphocholine + H2O = a 1,2-diacyl-sn-glycero-3-phosphate + choline + H(+). It catalyses the reaction ethanol + a 1,2-diacyl-sn-glycero-3-phosphocholine = 1,2-diacyl-sn-glycero-3-phosphoethanol + choline. It carries out the reaction 1,2-dihexadecanoyl-sn-glycero-3-phosphocholine + H2O = 1,2-dihexadecanoyl-sn-glycero-3-phosphate + choline + H(+). Its activity is regulated as follows. Stimulated by phosphatidylinositol 4,5-bisphosphate and phosphatidylinositol 3,4,5-trisphosphate, activated by the phosphokinase C-alpha, by the ADP-ribosylation factor-1 (ARF-1), and to a lesser extent by GTP-binding proteins: RHO A, RAC-1 and CDC42. Inhibited by oleate. Functionally, function as phospholipase selectivefor phosphatidylcholine. Implicated as a critical step in numerous cellular pathways, including signal transduction, membrane trafficking, and the regulation of mitosis. May be involved in the regulation of perinuclear intravesicular membrane traffic. In Mus musculus (Mouse), this protein is Phospholipase D1.